A 325-amino-acid polypeptide reads, in one-letter code: MATVHSPIPALYTVYILRSTVRHASFYVGSTPNPPRRLSQHNGLVRGGAVRTSRGNLRPWEMIILVSGFPSATAALKFEWALNNPHLSMHIPSAERLVVSTQRNRNGRPRRPAKSLASVASSLHLLLRVPSFARWPLCVQFFNRDAFAAWEKWCAGVSLGERGLRESWKVVTDFGEGVTSGGSGEVAAAEGEDEAPAPWGIHALPLDYEPMKEYVAKGQEIFEFERQGRCVVCREEMKSGEGLHAVCTHEGCDGVGHISCWSRSFLKNNDTGSILPVQGQCPMCKEEVDWADMMKELTLRLRGQKEVDKLLKRKRKRATKKAKKT.

A GIY-YIG domain is found at 10–92 (ALYTVYILRS…NNPHLSMHIP (83 aa)). The SLX1-type zinc finger occupies 230–284 (CVVCREEMKSGEGLHAVCTHEGCDGVGHISCWSRSFLKNNDTGSILPVQGQCPMC).

Belongs to the SLX1 family. As to quaternary structure, forms a heterodimer with SLX4. It depends on a divalent metal cation as a cofactor.

It is found in the nucleus. Catalytic subunit of the SLX1-SLX4 structure-specific endonuclease that resolves DNA secondary structures generated during DNA repair and recombination. Has endonuclease activity towards branched DNA substrates, introducing single-strand cuts in duplex DNA close to junctions with ss-DNA. The protein is Structure-specific endonuclease subunit SLX1 of Chaetomium globosum (strain ATCC 6205 / CBS 148.51 / DSM 1962 / NBRC 6347 / NRRL 1970) (Soil fungus).